Reading from the N-terminus, the 286-residue chain is Beta-lactamase SHV-13 (286 aa).

Positions 1–21 are cleaved as a signal peptide; that stretch reads MRYIRLCIISLLATLPLAVHA. The active-site Acyl-ester intermediate is the serine 66. Cysteine 73 and cysteine 119 are oxidised to a cystine. Glutamate 164 serves as the catalytic Proton acceptor. 230-232 is a substrate binding site; it reads KTG.

It belongs to the class-A beta-lactamase family.

It carries out the reaction a beta-lactam + H2O = a substituted beta-amino acid. With respect to regulation, inhibited 16-fold better by the beta-lactamase inhibitor clavulanic acid than by tazobactam. In terms of biological role, broad spectrum beta-lactamase which hydrolyzes penicillins, as well as cephalosporins except cephamycins. Also hydrolyzes aztreonam, but not imipenem. Confers highly resistance to ceftazidime, cefotaxime, aztreonam and piperacillin. This is Beta-lactamase SHV-13 (bla) from Klebsiella pneumoniae.